A 165-amino-acid chain; its full sequence is Phosphopantetheine adenylyltransferase (165 aa).

A substrate-binding site is contributed by threonine 10. Residues 10–11 (TF) and histidine 18 contribute to the ATP site. Substrate-binding residues include lysine 42, leucine 75, and arginine 89. Residues 90 to 92 (GLR), glutamate 100, and 125 to 131 (YTYVASS) each bind ATP.

The protein belongs to the bacterial CoaD family. As to quaternary structure, homohexamer. Mg(2+) is required as a cofactor.

It is found in the cytoplasm. It catalyses the reaction (R)-4'-phosphopantetheine + ATP + H(+) = 3'-dephospho-CoA + diphosphate. The protein operates within cofactor biosynthesis; coenzyme A biosynthesis; CoA from (R)-pantothenate: step 4/5. Functionally, reversibly transfers an adenylyl group from ATP to 4'-phosphopantetheine, yielding dephospho-CoA (dPCoA) and pyrophosphate. This is Phosphopantetheine adenylyltransferase from Chlorobium phaeobacteroides (strain BS1).